The primary structure comprises 441 residues: Protein translocase subunit SecY (441 aa).

The next 10 membrane-spanning stretches (helical) occupy residues 18–38 (ILFT…PSPG), 78–98 (AVGV…TVVI), 124–144 (IALA…GGLL), 157–177 (IFTL…VMWM), 180–200 (LITE…GIAA), 215–235 (GVVF…VVFV), 272–292 (VIPV…TQLI), 318–338 (LVYI…YVSI), 382–402 (IYLG…AGGT), and 403–423 (VQNL…GLDT).

This sequence belongs to the SecY/SEC61-alpha family. As to quaternary structure, component of the Sec protein translocase complex. Heterotrimer consisting of SecY, SecE and SecG subunits. The heterotrimers can form oligomers, although 1 heterotrimer is thought to be able to translocate proteins. Interacts with the ribosome. Interacts with SecDF, and other proteins may be involved. Interacts with SecA.

It is found in the cell membrane. The central subunit of the protein translocation channel SecYEG. Consists of two halves formed by TMs 1-5 and 6-10. These two domains form a lateral gate at the front which open onto the bilayer between TMs 2 and 7, and are clamped together by SecE at the back. The channel is closed by both a pore ring composed of hydrophobic SecY resides and a short helix (helix 2A) on the extracellular side of the membrane which forms a plug. The plug probably moves laterally to allow the channel to open. The ring and the pore may move independently. The polypeptide is Protein translocase subunit SecY (Mycobacterium bovis (strain ATCC BAA-935 / AF2122/97)).